A 1019-amino-acid chain; its full sequence is MKIHIIYQLKCRLIKAFKRIKSIHILIILFFSFVCWEILGFSTNILADFLWFQELNYLPVLINKLQTETWLWITTFLISMGFFLVNLRLASFFKYSKKQVRITERSEEIMLIPPVTIPSSKLRIEPSLSLSWLLCCIFGLILLVGLILTHYIDVFTNYLYPDLTVANVSPQIPSEFNIESICKILTSILSNLWLLGLFLLLSFAIIINPILWLSVFAVVLSLVFSFILSSHWANILQLLHGTPFNKSEDLFHIDISFYVFQLPVLELLRFWLIGLFLYGFVACILIYLLSGKSLSQGNFYQFSQQQEKHLHGLGGGFILTIAFSYFIACFELLYSRRGVVYGAGYTDIKVQLPAYVFLGILALLIAFFLFWQAIFSVKSIQSYIEASLWFLRLGRKRKRKKKVIAKLFANSYSLRAILTWYLIIAVIAGWLIPKIVQMAIVQPNEIEREIPYIKRSITFTKEAYIDVDKLEVELFDPNNELTYDDLINNKLIIENIRLWDTRPILQTNRQLQQIRPYYEFINADIDRYTFLKKESERTKNNLTKKQQVIIAARELNYESVPQPAQTWVNEHLVYTHGYGFTLSPINQVEKNGLPEYFVKNIGPDPTLEKNSTLEVLNRIRDSIPIGKPRIYYGELTNTNIMTSTAQRNKELDYPSGEANSYNTYDGSGGIVIGQGWQRWIFAKYLKDWKMLLTNEFIPETKLLYRRNINARVRSIAPFLRYDHDPYLVVADPNFGHKNMNQKNPNYLYWIIDAYTTTNHYPYSDPENNEFNYIRNSVKVVIDAYNGSVKFYVADPKDPIIRTWKKAFSDMFNSIEEMPTSLYTHIRYPLDLFQVQSEVLSTYHMDDPRVFYNREDLWRVPIEIYGAQQQKVKPYYLITQLPTETSEEFILLLPYTPASRNNLIAWLAARSDGENYGKLLLYQFPKQRLIYGIEQIEALINQDPEISQQISLWNRQGSKAIKGNLLVIPINESLIYVEPIYLEAEQNSLPTLRRVIVSYKNRVVMKPTLDEALQEVFQIQ.

9 helical membrane passes run 23–43, 67–87, 128–148, 192–212, 213–233, 270–290, 313–333, 355–375, and 416–436; these read IHIL…GFST, TETW…LVNL, LSLS…GLIL, LWLL…PILW, LSVF…SHWA, FWLI…YLLS, LGGG…FELL, YVFL…QAIF, and AILT…PKIV.

It belongs to the UPF0182 family.

It is found in the cell membrane. This is UPF0182 protein Tery_0938 from Trichodesmium erythraeum (strain IMS101).